Here is a 519-residue protein sequence, read N- to C-terminus: Trichothecene 15-O-acetyltransferase TRI3 (519 aa).

15-deacetylcalonectrin is bound at residue H414.

It belongs to the trichothecene O-acetyltransferase family.

It functions in the pathway sesquiterpene biosynthesis; trichothecene biosynthesis. 15-O-acetyltransferase; part of the core gene cluster that mediates the biosynthesis of trichothecenes, a very large family of chemically related bicyclic sesquiterpene compounds acting as mycotoxins, including T2-toxin. The biosynthesis of trichothecenes begins with the cyclization of farnesyl diphosphate to trichodiene and is catalyzed by the trichodiene synthase TRI5. Trichodiene undergoes a series of oxygenations catalyzed by the cytochrome P450 monooxygenase TRI4. TRI4 controls the addition of four oxygens at C-2, C-3, C-11, and the C-12, C-13-epoxide to form the intermediate isotrichotriol. Isotrichotriol then undergoes a non-enzymatic isomerization and cyclization to form isotrichodermol. During this process, the oxygen at the C-2 position becomes the pyran ring oxygen and the hydroxyl group at C-11 is lost. More complex type A trichothecenes are built by modifying isotrichodermol through a series of paired hydroxylation and acetylation or acylation steps. Isotrichodermol is converted to isotrichodermin by the acetyltransferase TRI101. TRI101 encodes a C-3 transacetylase that acts as a self-protection or resistance factor during biosynthesis and that the presence of a free C-3 hydroxyl group is a key component of Fusarium trichothecene phytotoxicity. A second hydroxyl group is added to C-15 by the trichothecene C-15 hydroxylase TRI11, producing 15-decalonectrin, which is then acetylated by TRI3, producing calonectrin. A third hydroxyl group is added at C-4 by the cytochrome P450 monooxygenase TRI13, converting calonectrin to 3,15-diacetoxyspirpenol, which is subsequently acetylated by the acetyltransferase TRI7. A fourth hydroxyl group is added to C-8 by the cytochrome P450 monooxygenase TRI1, followed by the addition of an isovaleryl moiety by TRI16. Finally, the acetyl group is removed from the C-3 position by the trichothecene C-3 esterase TRI8 to produce T-2 toxin. The polypeptide is Trichothecene 15-O-acetyltransferase TRI3 (Fusarium sporotrichioides).